The following is a 255-amino-acid chain: tRNA (guanine-N(1)-)-methyltransferase (255 aa).

S-adenosyl-L-methionine contacts are provided by residues G113 and 133-138 (IGDYVL).

This sequence belongs to the RNA methyltransferase TrmD family. Homodimer.

It localises to the cytoplasm. It carries out the reaction guanosine(37) in tRNA + S-adenosyl-L-methionine = N(1)-methylguanosine(37) in tRNA + S-adenosyl-L-homocysteine + H(+). Functionally, specifically methylates guanosine-37 in various tRNAs. The polypeptide is tRNA (guanine-N(1)-)-methyltransferase (Escherichia fergusonii (strain ATCC 35469 / DSM 13698 / CCUG 18766 / IAM 14443 / JCM 21226 / LMG 7866 / NBRC 102419 / NCTC 12128 / CDC 0568-73)).